A 206-amino-acid chain; its full sequence is Apoptosis regulator OPG045 (206 aa).

Belongs to the orthopoxvirus OPG045 family. As to quaternary structure, homodimer. Interacts with host pro-apoptotic protein BCL2L11 (via BH3 domain). Interacts with host NLRP1. Interacts with host BAK.

It is found in the host mitochondrion outer membrane. Its subcellular location is the host cytoplasm. Plays a role in evading host innate immune response by inhibiting host inflammasome activation. Interacts with and inhibits NLR-mediated interleukin-1 beta/IL1B production in infected cells. At the host mitochondria outer membrane, interacts with the BH3 domain of host BAK and prevents BAK from binding active BAX. In turn, host apoptosis is inhibited. This chain is Apoptosis regulator OPG045 (OPG045), found in Vaccinia virus (strain L-IVP) (VACV).